A 171-amino-acid chain; its full sequence is NADH-quinone oxidoreductase subunit I (171 aa).

2 4Fe-4S ferredoxin-type domains span residues L41–T71 and E81–D110. The [4Fe-4S] cluster site is built by C51, C54, C57, C61, C90, C93, C96, and C100.

Belongs to the complex I 23 kDa subunit family. In terms of assembly, NDH-1 is composed of 13 different subunits. Subunits NuoA, H, J, K, L, M, N constitute the membrane sector of the complex. It depends on [4Fe-4S] cluster as a cofactor.

It is found in the cell inner membrane. It carries out the reaction a quinone + NADH + 5 H(+)(in) = a quinol + NAD(+) + 4 H(+)(out). Its function is as follows. NDH-1 shuttles electrons from NADH, via FMN and iron-sulfur (Fe-S) centers, to quinones in the respiratory chain. The immediate electron acceptor for the enzyme in this species is believed to be ubiquinone. Couples the redox reaction to proton translocation (for every two electrons transferred, four hydrogen ions are translocated across the cytoplasmic membrane), and thus conserves the redox energy in a proton gradient. In Shewanella woodyi (strain ATCC 51908 / MS32), this protein is NADH-quinone oxidoreductase subunit I.